Reading from the N-terminus, the 52-residue chain is Venom peptide 4b (52 aa).

Positions 1-23 are cleaved as a signal peptide; the sequence is MRSAILLVIVAIVAILGFLGVNA. AXPX repeat units lie at residues 23–26, 31–34, and 39–42; these read AEPL, AEPN, and AAPL. Residues 24–41 constitute a propeptide that is removed on maturation; that stretch reads EPLPSPLAEPNPHAKAAP. Residues 30–52 are disordered; it reads LAEPNPHAKAAPLSPAAMASLAG. Positions 37 to 52 are enriched in low complexity; that stretch reads AKAAPLSPAAMASLAG. Position 51 is an alanine amide (Ala51).

As to expression, expressed by the venom gland.

It is found in the secreted. In Eumenes pomiformis (Potter wasp), this protein is Venom peptide 4b.